Reading from the N-terminus, the 182-residue chain is Protein canopy homolog 2 (182 aa).

The N-terminal stretch at 1 to 20 (MKGWGWLALLLGALLGTAWA) is a signal peptide. In terms of domain architecture, Saposin B-type spans 24 to 175 (QDLHCGACRA…KRTDLCDHAL (152 aa)). 3 disulfides stabilise this stretch: cysteine 28–cysteine 171, cysteine 31–cysteine 164, and cysteine 86–cysteine 137. Position 115 is a phosphoserine (serine 115). Residues 179-182 (HDEL) carry the Prevents secretion from ER motif.

The protein belongs to the canopy family. In terms of assembly, interacts with MYLIP/MIR. As to expression, expressed in different tissues. Highest levels are detected in adult placenta, liver and pancreas.

Its subcellular location is the endoplasmic reticulum. Positive regulator of neurite outgrowth by stabilizing myosin regulatory light chain (MRLC). It prevents MIR-mediated MRLC ubiquitination and its subsequent proteasomal degradation. The polypeptide is Protein canopy homolog 2 (CNPY2) (Homo sapiens (Human)).